The following is a 60-amino-acid chain: Large ribosomal subunit protein bL32 (60 aa).

It belongs to the bacterial ribosomal protein bL32 family.

The polypeptide is Large ribosomal subunit protein bL32 (Streptococcus pneumoniae serotype 19F (strain G54)).